We begin with the raw amino-acid sequence, 462 residues long: MNKGTITQIISAVVDIAFKDELPAIYNALKVKLEDKELVLEVEQHLGNNVVRTVAMDSTDGLKRGMEVIDTGKPITIPVGKAVLGRILNVLGEPVDNQGPLNAETFLPIHREAPEFDDLETETEIFETGIKVIDLLAPYIKGGKIGLFGGAGVGKTVLIMELINNIAKGHGGISVFAGVGERTREGRDLYGEMTESGVITKTALVYGQMNEPPGARLRVALTGLTVAENFRDKDGQDVLLFIDNIFRFTQAGSEVSALLGRIPSAVGYQPNLATEMGALQERITSTKSGSITSVQAVYVPADDLTDPAPATTFSHLDATTVLSRNIASLGIYPAVDPLDSTSKALSEDVVGKEHYEVARKVQEVLQRYKELQDIIAILGMDELSDEDKLTVSRARKIERFFSQPFSVAEQFTGMEGKYVPVKETIRGFREILEGKHDDIPEQAFLYVGTIEEAVAKSKDLAK.

Residue 149–156 participates in ATP binding; the sequence is GGAGVGKT.

The protein belongs to the ATPase alpha/beta chains family. In terms of assembly, F-type ATPases have 2 components, CF(1) - the catalytic core - and CF(0) - the membrane proton channel. CF(1) has five subunits: alpha(3), beta(3), gamma(1), delta(1), epsilon(1). CF(0) has three main subunits: a(1), b(2) and c(9-12). The alpha and beta chains form an alternating ring which encloses part of the gamma chain. CF(1) is attached to CF(0) by a central stalk formed by the gamma and epsilon chains, while a peripheral stalk is formed by the delta and b chains.

The protein resides in the cell inner membrane. It carries out the reaction ATP + H2O + 4 H(+)(in) = ADP + phosphate + 5 H(+)(out). In terms of biological role, produces ATP from ADP in the presence of a proton gradient across the membrane. The catalytic sites are hosted primarily by the beta subunits. The chain is ATP synthase subunit beta from Fusobacterium nucleatum subsp. nucleatum (strain ATCC 25586 / DSM 15643 / BCRC 10681 / CIP 101130 / JCM 8532 / KCTC 2640 / LMG 13131 / VPI 4355).